The sequence spans 210 residues: uncharacterized protein (210 aa).

Phosphoserine occurs at positions 18, 39, 41, 57, and 60. A compositionally biased stretch (polar residues) spans 33 to 46; sequence LDLDQRSMSPSNIA. The disordered stretch occupies residues 33-58; sequence LDLDQRSMSPSNIASGEDRITRTNSG. Disordered stretches follow at residues 100–139 and 177–210; these read YDHN…YKVS and DSAP…NVHT. Over residues 102-116 the composition is skewed to polar residues; the sequence is HNNGTKSPTPKTSNM. Basic and acidic residues predominate over residues 130–139; the sequence is NDKDDKYKVS. 3 positions are modified to phosphoserine: Ser178, Ser189, and Ser192. A compositionally biased stretch (polar residues) spans 191-210; that stretch reads HSPSLNSMDNTTKHSSNVHT.

This is an uncharacterized protein from Saccharomyces cerevisiae (strain ATCC 204508 / S288c) (Baker's yeast).